Reading from the N-terminus, the 60-residue chain is uncharacterized protein (60 aa).

Residues 11–33 (VFTVGFITGGVTPVMVSFVWPAA) form a helical membrane-spanning segment. 2 N-linked (GlcNAc...) asparagine; by host glycosylation sites follow: Asn-40 and Asn-57.

The protein localises to the host membrane. This is an uncharacterized protein from African swine fever virus (strain Badajoz 1971 Vero-adapted) (Ba71V).